Consider the following 247-residue polypeptide: Probable dihydroorotate dehydrogenase B (NAD(+)), electron transfer subunit (247 aa).

One can recognise an FAD-binding FR-type domain in the interval 1–87 (MLRRVTLKET…RGPYGNGFKE (87 aa)). Cys200, Cys205, Cys208, and Cys216 together coordinate [2Fe-2S] cluster.

The protein belongs to the PyrK family. Heterotetramer of 2 PyrK and 2 PyrD type B subunits. Requires [2Fe-2S] cluster as cofactor. FAD serves as cofactor.

The protein operates within pyrimidine metabolism; UMP biosynthesis via de novo pathway; orotate from (S)-dihydroorotate (NAD(+) route): step 1/1. Functionally, responsible for channeling the electrons from the oxidation of dihydroorotate from the FMN redox center in the PyrD type B subunit to the ultimate electron acceptor NAD(+). The polypeptide is Probable dihydroorotate dehydrogenase B (NAD(+)), electron transfer subunit (Pyrococcus horikoshii (strain ATCC 700860 / DSM 12428 / JCM 9974 / NBRC 100139 / OT-3)).